Consider the following 174-residue polypeptide: ATP-dependent protease subunit HslV (174 aa).

Threonine 2 is a catalytic residue. Glycine 157, cysteine 160, and threonine 163 together coordinate Na(+).

This sequence belongs to the peptidase T1B family. HslV subfamily. A double ring-shaped homohexamer of HslV is capped on each side by a ring-shaped HslU homohexamer. The assembly of the HslU/HslV complex is dependent on binding of ATP.

The protein localises to the cytoplasm. It catalyses the reaction ATP-dependent cleavage of peptide bonds with broad specificity.. Allosterically activated by HslU binding. Its function is as follows. Protease subunit of a proteasome-like degradation complex believed to be a general protein degrading machinery. This Shewanella frigidimarina (strain NCIMB 400) protein is ATP-dependent protease subunit HslV.